Consider the following 270-residue polypeptide: Tryptophan synthase alpha chain (270 aa).

Residues glutamate 60 and aspartate 71 each act as proton acceptor in the active site.

Belongs to the TrpA family. Tetramer of two alpha and two beta chains.

It carries out the reaction (1S,2R)-1-C-(indol-3-yl)glycerol 3-phosphate + L-serine = D-glyceraldehyde 3-phosphate + L-tryptophan + H2O. It participates in amino-acid biosynthesis; L-tryptophan biosynthesis; L-tryptophan from chorismate: step 5/5. Functionally, the alpha subunit is responsible for the aldol cleavage of indoleglycerol phosphate to indole and glyceraldehyde 3-phosphate. The protein is Tryptophan synthase alpha chain of Deinococcus radiodurans (strain ATCC 13939 / DSM 20539 / JCM 16871 / CCUG 27074 / LMG 4051 / NBRC 15346 / NCIMB 9279 / VKM B-1422 / R1).